A 662-amino-acid chain; its full sequence is Polyunsaturated fatty acid (12S)/(13S)-lipoxygenase, epidermal-type (662 aa).

A PLAT domain is found at 2–114 (GKYKILVVTG…TIYLPEGTAL (113 aa)). In terms of domain architecture, Lipoxygenase spans 114-662 (LKVNDDTKNL…PSMVENSVTI (549 aa)). Positions 360, 365, 540, 544, and 662 each coordinate Fe cation.

It belongs to the lipoxygenase family. Fe cation is required as a cofactor.

The protein resides in the cytoplasm. The catalysed reaction is (5Z,8Z,11Z,14Z)-eicosatetraenoate + O2 = (12S)-hydroperoxy-(5Z,8Z,10E,14Z)-eicosatetraenoate. It catalyses the reaction 1-O-methyl-(9Z,12Z)-octadecadienoate + O2 = 1-O-methyl-(13S)-hydroperoxy-(9Z,11E)-octadecadienoate. It carries out the reaction (8Z,11Z,14Z)-eicosatrienoate + O2 = (12S)-hydroperoxy-(8Z,10E,14Z)-eicosatrienoate. The enzyme catalyses (5Z,8Z,11Z)-eicosatrienoate + O2 = (12S)-hydroperoxy-(5Z,8Z,10E)-eicosatrienoate. The catalysed reaction is 1-O-methyl-(5Z,8Z,11Z,14Z)-eicosatetraenoate + O2 = 1-O-methyl-(12S)-hydroperoxy-(5Z,8Z,10E,14Z)-eicosatetraenoate. It catalyses the reaction (9Z,12Z)-octadecadienoate + O2 = (13S)-hydroperoxy-(9Z,11E)-octadecadienoate. It carries out the reaction (4Z,7Z,10Z,13Z,16Z,19Z)-docosahexaenoate + O2 = (14S)-hydroperoxy-(4Z,7Z,10Z,12E,16Z,19Z)-docosahexaenoate. It functions in the pathway lipid metabolism; hydroperoxy eicosatetraenoic acid biosynthesis. Arachidonate 12-lipoxygenase activity is decreased when the pH decreases from 7.4 to 6.0. In terms of biological role, catalyzes the regio and stereo-specific incorporation of a single molecule of dioxygen into free and esterified polyunsaturated fatty acids generating lipid hydroperoxides that can be further reduced to the corresponding hydroxy species. Shows increasing catalytic activity within the series arachidonic acid &lt; 5,8,11-eicosatrienoic acid &lt; linoleic acid &lt; 8,11,14-eicosatrienoic acid. The chain is Polyunsaturated fatty acid (12S)/(13S)-lipoxygenase, epidermal-type from Rattus norvegicus (Rat).